A 434-amino-acid polypeptide reads, in one-letter code: Trigger factor (434 aa).

The PPIase FKBP-type domain maps to 161–246 (EDRVTIDFTG…LKKVEERELP (86 aa)).

Belongs to the FKBP-type PPIase family. Tig subfamily.

It is found in the cytoplasm. The enzyme catalyses [protein]-peptidylproline (omega=180) = [protein]-peptidylproline (omega=0). In terms of biological role, involved in protein export. Acts as a chaperone by maintaining the newly synthesized protein in an open conformation. Functions as a peptidyl-prolyl cis-trans isomerase. The sequence is that of Trigger factor from Pectobacterium carotovorum subsp. carotovorum (strain PC1).